A 309-amino-acid chain; its full sequence is Probable inactive poly [ADP-ribose] polymerase SRO5 (309 aa).

Residues 28–255 form the PARP catalytic domain; it reads CDSSSDRSFA…AFPVLIKALS (228 aa). The RST domain occupies 238 to 309; the sequence is KRLRSPWMAF…IKACGHKVQH (72 aa).

In terms of assembly, interacts with dehydration-responsive DREB2 proteins and a number of transcription factors belonging to several protein families.

The protein localises to the nucleus matrix. In terms of biological role, probable inactive ADP-ribosyltransferase that may be involved in stress and developmental responses. This is Probable inactive poly [ADP-ribose] polymerase SRO5 (SRO5) from Arabidopsis thaliana (Mouse-ear cress).